We begin with the raw amino-acid sequence, 535 residues long: Probable inorganic phosphate transporter 1-7 (535 aa).

The Cytoplasmic portion of the chain corresponds to 1–24; the sequence is MAGDQLNVLNALDVAKTQWYHFTA. Residues 25-45 traverse the membrane as a helical segment; that stretch reads IIIAGMGFFTDAYDLFCISLV. Topologically, residues 46–70 are extracellular; it reads TKLLGRIYYHVDGSEKPGTLPPNVS. The chain crosses the membrane as a helical span at residues 71 to 91; it reads AAVNGVAFCGTLAGQLFFGWL. At 92–99 the chain is on the cytoplasmic side; sequence GDKLGRKK. A helical transmembrane segment spans residues 100–120; the sequence is VYGMTLMVMVLCSIASGLSFG. At 121 to 131 the chain is on the extracellular side; that stretch reads SNPKTVMTTLC. A helical transmembrane segment spans residues 132 to 152; sequence FFRFWLGFGIGGDYPLSATIM. Residues 153–161 lie on the Cytoplasmic side of the membrane; it reads SEYANKKTR. The chain crosses the membrane as a helical span at residues 162–182; sequence GAFIAAVFAMQGFGILTGGIF. The Extracellular portion of the chain corresponds to 183-211; the sequence is AIIVSAAFEAKFPAPTYQIDALASTVPQA. Residues 212–232 form a helical membrane-spanning segment; the sequence is DYVWRIILMVGALPAAMTYYS. The Cytoplasmic portion of the chain corresponds to 233-289; sequence RSKMPETARYTALVAKDAKLAASNMSKVLQVEIEAEQQGTEDKSNSFGLFSKEFMKR. A helical membrane pass occupies residues 290 to 310; the sequence is HGLHLLGTTSTWFLLDIAFYS. Residues 311-345 are Extracellular-facing; that stretch reads QNLFQKDIFSAIGWIPPAQTMNAIQEVFKIARAQT. A helical membrane pass occupies residues 346-366; it reads LIALCSTVPGYWFTVAFIDVI. The Cytoplasmic segment spans residues 367 to 368; it reads GR. The chain crosses the membrane as a helical span at residues 369 to 389; sequence FAIQMMGFFFMTVFMFALAIP. The Extracellular portion of the chain corresponds to 390–399; sequence YDHWTHKENR. Residues 400 to 420 traverse the membrane as a helical segment; sequence IGFVAMYSLTFFFANFGPNAT. The Cytoplasmic portion of the chain corresponds to 421–438; sequence TFVVPAEIFPARFRSTCH. Residues 439 to 459 traverse the membrane as a helical segment; it reads GISAASGKLGAMVGAFGFLYL. Over 460-480 the chain is Extracellular; the sequence is AQSPDKTKTEHGYPPGIGVKN. The chain crosses the membrane as a helical span at residues 481–501; the sequence is SLIVLGVVNLLGMVFTLLVPE. Residues 502-535 are Cytoplasmic-facing; that stretch reads SKGKSLEEMSGENEQNDESSSSSNNNSNNAVSTA. The disordered stretch occupies residues 506-535; it reads SLEEMSGENEQNDESSSSSNNNSNNAVSTA. The segment covering 519–535 has biased composition (low complexity); the sequence is ESSSSSNNNSNNAVSTA. At S520 the chain carries Phosphoserine.

The protein belongs to the major facilitator superfamily. Phosphate:H(+) symporter (TC 2.A.1.9) family. As to expression, mature pollen.

It is found in the membrane. Its function is as follows. High-affinity transporter for external inorganic phosphate. In Arabidopsis thaliana (Mouse-ear cress), this protein is Probable inorganic phosphate transporter 1-7 (PHT1-7).